A 350-amino-acid chain; its full sequence is Phosphoribosylformylglycinamidine cyclo-ligase (350 aa).

Belongs to the AIR synthase family.

It is found in the cytoplasm. It catalyses the reaction 2-formamido-N(1)-(5-O-phospho-beta-D-ribosyl)acetamidine + ATP = 5-amino-1-(5-phospho-beta-D-ribosyl)imidazole + ADP + phosphate + H(+). It functions in the pathway purine metabolism; IMP biosynthesis via de novo pathway; 5-amino-1-(5-phospho-D-ribosyl)imidazole from N(2)-formyl-N(1)-(5-phospho-D-ribosyl)glycinamide: step 2/2. The sequence is that of Phosphoribosylformylglycinamidine cyclo-ligase from Cupriavidus necator (strain ATCC 17699 / DSM 428 / KCTC 22496 / NCIMB 10442 / H16 / Stanier 337) (Ralstonia eutropha).